Here is a 158-residue protein sequence, read N- to C-terminus: NAD(P)H-quinone oxidoreductase subunit J, chloroplastic (158 aa).

It belongs to the complex I 30 kDa subunit family. As to quaternary structure, NDH is composed of at least 16 different subunits, 5 of which are encoded in the nucleus.

The protein localises to the plastid. Its subcellular location is the chloroplast thylakoid membrane. It catalyses the reaction a plastoquinone + NADH + (n+1) H(+)(in) = a plastoquinol + NAD(+) + n H(+)(out). It carries out the reaction a plastoquinone + NADPH + (n+1) H(+)(in) = a plastoquinol + NADP(+) + n H(+)(out). NDH shuttles electrons from NAD(P)H:plastoquinone, via FMN and iron-sulfur (Fe-S) centers, to quinones in the photosynthetic chain and possibly in a chloroplast respiratory chain. The immediate electron acceptor for the enzyme in this species is believed to be plastoquinone. Couples the redox reaction to proton translocation, and thus conserves the redox energy in a proton gradient. The polypeptide is NAD(P)H-quinone oxidoreductase subunit J, chloroplastic (Psilotum nudum (Whisk fern)).